A 427-amino-acid chain; its full sequence is Serine hydroxymethyltransferase (427 aa).

Residues L122 and 126–128 (GHL) contribute to the (6S)-5,6,7,8-tetrahydrofolate site. K231 is subject to N6-(pyridoxal phosphate)lysine. (6S)-5,6,7,8-tetrahydrofolate contacts are provided by residues E247 and 355–357 (SPF).

The protein belongs to the SHMT family. Homodimer. The cofactor is pyridoxal 5'-phosphate.

The protein localises to the cytoplasm. It catalyses the reaction (6R)-5,10-methylene-5,6,7,8-tetrahydrofolate + glycine + H2O = (6S)-5,6,7,8-tetrahydrofolate + L-serine. Its pathway is one-carbon metabolism; tetrahydrofolate interconversion. The protein operates within amino-acid biosynthesis; glycine biosynthesis; glycine from L-serine: step 1/1. Functionally, catalyzes the reversible interconversion of serine and glycine with tetrahydrofolate (THF) serving as the one-carbon carrier. This reaction serves as the major source of one-carbon groups required for the biosynthesis of purines, thymidylate, methionine, and other important biomolecules. Also exhibits THF-independent aldolase activity toward beta-hydroxyamino acids, producing glycine and aldehydes, via a retro-aldol mechanism. This chain is Serine hydroxymethyltransferase, found in Synechocystis sp. (strain ATCC 27184 / PCC 6803 / Kazusa).